The chain runs to 247 residues: 1-(5-phosphoribosyl)-5-[(5-phosphoribosylamino)methylideneamino] imidazole-4-carboxamide isomerase 1 (247 aa).

The active-site Proton acceptor is Glu-8. Residue Asp-128 is the Proton donor of the active site.

This sequence belongs to the HisA/HisF family.

The protein resides in the cytoplasm. It carries out the reaction 1-(5-phospho-beta-D-ribosyl)-5-[(5-phospho-beta-D-ribosylamino)methylideneamino]imidazole-4-carboxamide = 5-[(5-phospho-1-deoxy-D-ribulos-1-ylimino)methylamino]-1-(5-phospho-beta-D-ribosyl)imidazole-4-carboxamide. The protein operates within amino-acid biosynthesis; L-histidine biosynthesis; L-histidine from 5-phospho-alpha-D-ribose 1-diphosphate: step 4/9. This Ruegeria sp. (strain TM1040) (Silicibacter sp.) protein is 1-(5-phosphoribosyl)-5-[(5-phosphoribosylamino)methylideneamino] imidazole-4-carboxamide isomerase 1.